Here is a 506-residue protein sequence, read N- to C-terminus: Histidine ammonia-lyase (506 aa).

Residues 144–146 (ASG) constitute a cross-link (5-imidazolinone (Ala-Gly)). Ser145 carries the 2,3-didehydroalanine (Ser) modification.

The protein belongs to the PAL/histidase family. Post-translationally, contains an active site 4-methylidene-imidazol-5-one (MIO), which is formed autocatalytically by cyclization and dehydration of residues Ala-Ser-Gly.

It is found in the cytoplasm. The enzyme catalyses L-histidine = trans-urocanate + NH4(+). It functions in the pathway amino-acid degradation; L-histidine degradation into L-glutamate; N-formimidoyl-L-glutamate from L-histidine: step 1/3. The polypeptide is Histidine ammonia-lyase (Legionella pneumophila (strain Paris)).